Here is a 543-residue protein sequence, read N- to C-terminus: Reticulophagy regulator 2 (543 aa).

3 helical membrane passes run 12–32 (AGGGPGMGLSLGLGLGLSLGM), 100–120 (SLRPFFLLSVSLLAYFLLDLW), and 204–224 (VPGIMISYIVLLSILLWPLVV). Residues 254-265 (LHHKHDKRKRQG) show a composition bias toward basic residues. The tract at residues 254–287 (LHHKHDKRKRQGKNAPPGGDEPLAETESESEAEL) is disordered. A compositionally biased stretch (acidic residues) spans 275–285 (PLAETESESEA). Thr279 is modified (phosphothreonine). Phosphoserine occurs at positions 281, 283, 291, and 311. Thr334 carries the post-translational modification Phosphothreonine. Disordered stretches follow at residues 336–394 (VSED…DVAA) and 411–486 (HFNG…EEEA). Phosphoserine is present on residues Ser337, Ser344, Ser347, and Ser385. Residues 461 to 480 (APSPSILPPVPQDSPQPLPA) are compositionally biased toward pro residues. The LIR motif motif lies at 490–495 (EDFELL). The interval 504-543 (NAELGLEPETPPKPPDAPPLGPDIHSLVQSDQEAQAVAEP) is disordered. Over residues 512-524 (ETPPKPPDAPPLG) the composition is skewed to pro residues.

The protein belongs to the RETREG family. In terms of assembly, interacts with ATG8 family modifier proteins MAP1LC3A, MAP1LC3B, MAP1LC3C, GABARAP, GABARAPL1 and GABARAPL2. Shows higher affinity for GABARAPL1 than for MAP1LC3B. Interacts with CANX.

It is found in the endoplasmic reticulum membrane. Endoplasmic reticulum (ER)-anchored autophagy regulator which exists in an inactive state under basal conditions but is activated following cellular stress. When activated, induces ER fragmentation and mediates ER delivery into lysosomes through sequestration into autophagosomes via interaction with ATG8 family proteins. Required for collagen quality control in a LIR motif-independent manner. The polypeptide is Reticulophagy regulator 2 (Homo sapiens (Human)).